The primary structure comprises 70 residues: Protein SlyX homolog (70 aa).

Belongs to the SlyX family.

This Shewanella frigidimarina (strain NCIMB 400) protein is Protein SlyX homolog.